A 268-amino-acid chain; its full sequence is MSVSAPLLDAKVRYGRDGWLPLPHTLSDPDVRKLRQRIEGISREQRPEVVLEEGSSAVRALHGCHDFDEVCARLVRLPALVGLAEQLLGGPVYVYQFKVNMKQAHEGAAWPWHQDFAFWHHEDGMGAPDAVNIAIFLDDVTDENGPLEVIPGSQHAGIVEDTARPGRERSHDWRHHVSAKLEYVVPDEIAGRLAGTFGVRRLTGPAGTAVAFHPSIIHSSSNNTSAQRRCVLLITYNRVTNTPAHPVRPPFLVSRDSTPVVPVDADRL.

Residues His113, Asp115, and His218 each contribute to the Fe cation site.

It belongs to the PhyH family. Monomer. Fe(2+) is required as a cofactor.

The catalysed reaction is L-proline + 2-oxoglutarate + O2 = trans-4-hydroxy-L-proline + succinate + CO2. The protein operates within antibiotic biosynthesis. Its activity is regulated as follows. Competitively inhibited by pyridine-2,4-dicarboxylate. Inhibited by diethyl pyrocarbonate (DEPC), 3,4-dihydroxybenzoate, pyridine-2,5-dicarboxylate, alpha,alpha'-dipyridyl, and some metal ions such as Co(2+) and Zn(2+). Functionally, involved in the biosynthesis of the peptidolactone antibiotic etamycin (viridogrisein). Catalyzes the hydroxylation of free L-proline at the C-4 position to yield trans-4-hydroxy-L-proline. This chain is L-proline trans-4-hydroxylase, found in Streptomyces griseoviridis.